The primary structure comprises 118 residues: UPF0102 protein Sde_3146 (118 aa).

Belongs to the UPF0102 family.

This chain is UPF0102 protein Sde_3146, found in Saccharophagus degradans (strain 2-40 / ATCC 43961 / DSM 17024).